Reading from the N-terminus, the 77-residue chain is DNA-directed RNA polymerase subunit omega (77 aa).

Belongs to the RNA polymerase subunit omega family. The RNAP catalytic core consists of 2 alpha, 1 beta, 1 beta' and 1 omega subunit. When a sigma factor is associated with the core the holoenzyme is formed, which can initiate transcription.

The enzyme catalyses RNA(n) + a ribonucleoside 5'-triphosphate = RNA(n+1) + diphosphate. Promotes RNA polymerase assembly. Latches the N- and C-terminal regions of the beta' subunit thereby facilitating its interaction with the beta and alpha subunits. The polypeptide is DNA-directed RNA polymerase subunit omega (Nitratidesulfovibrio vulgaris (strain ATCC 29579 / DSM 644 / CCUG 34227 / NCIMB 8303 / VKM B-1760 / Hildenborough) (Desulfovibrio vulgaris)).